A 150-amino-acid polypeptide reads, in one-letter code: UPF0178 protein Sbal223_2514 (150 aa).

This sequence belongs to the UPF0178 family.

This is UPF0178 protein Sbal223_2514 from Shewanella baltica (strain OS223).